The following is a 522-amino-acid chain: Protein disulfide-isomerase (522 aa).

The segment at residues 1–28 is a signal peptide (or 22); sequence MKFSAGAVLSWSSLLLASSVFAQQEAVA. The Thioredoxin 1 domain maps to 29–141; sequence PEDSAVVKLA…VQFMIKQSQP (113 aa). Catalysis depends on nucleophile residues Cys-61 and Cys-64. A disulfide bridge connects residues Cys-61 and Cys-64. Asn-82, Asn-117, Asn-155, and Asn-174 each carry an N-linked (GlcNAc...) asparagine glycan. The Thioredoxin 2 domain maps to 356-485; it reads FLKGDASPIV…LFDFIKENGH (130 aa). Active-site nucleophile residues include Cys-406 and Cys-409. A disulfide bond links Cys-406 and Cys-409. An N-linked (GlcNAc...) asparagine glycan is attached at Asn-425. The segment at 497–522 is disordered; it reads AQEKAAEEADADAELADEEDAIHDEL. Positions 504–522 are enriched in acidic residues; the sequence is EADADAELADEEDAIHDEL. The short motif at 519 to 522 is the Prevents secretion from ER element; that stretch reads HDEL.

The protein belongs to the protein disulfide isomerase family. Interacts with EPS1, KAR2 and MNL1. The N-terminus is blocked.

It localises to the endoplasmic reticulum lumen. The enzyme catalyses Catalyzes the rearrangement of -S-S- bonds in proteins.. Functionally, protein disulfide isomerase of ER lumen required for formation of disulfide bonds in secretory and cell-surface proteins and which unscrambles non-native disulfide bonds. Forms a complex with MNL1 to process unfolded protein-bound Man8GlcNAc2 oligosaccharides to Man7GlcNAc2, promoting degradation in unfolded protein response. This chain is Protein disulfide-isomerase (PDI1), found in Saccharomyces cerevisiae (strain ATCC 204508 / S288c) (Baker's yeast).